The sequence spans 511 residues: D-alanine--D-alanyl carrier protein ligase (511 aa).

152-153 (TS) contributes to the ATP binding site. Aspartate 199 is a D-alanine binding site. 294–299 (NAYGPT) is an ATP binding site. Residue valine 303 participates in D-alanine binding. Residues aspartate 385, 397-400 (YGGR), and lysine 499 contribute to the ATP site. D-alanine is bound at residue lysine 499.

This sequence belongs to the ATP-dependent AMP-binding enzyme family. DltA subfamily.

The protein resides in the cytoplasm. It carries out the reaction holo-[D-alanyl-carrier protein] + D-alanine + ATP = D-alanyl-[D-alanyl-carrier protein] + AMP + diphosphate. It functions in the pathway cell wall biogenesis; lipoteichoic acid biosynthesis. In terms of biological role, catalyzes the first step in the D-alanylation of lipoteichoic acid (LTA), the activation of D-alanine and its transfer onto the D-alanyl carrier protein (Dcp) DltC. In an ATP-dependent two-step reaction, forms a high energy D-alanyl-AMP intermediate, followed by transfer of the D-alanyl residue as a thiol ester to the phosphopantheinyl prosthetic group of the Dcp. D-alanylation of LTA plays an important role in modulating the properties of the cell wall in Gram-positive bacteria, influencing the net charge of the cell wall. The chain is D-alanine--D-alanyl carrier protein ligase from Streptococcus agalactiae serotype V (strain ATCC BAA-611 / 2603 V/R).